A 380-amino-acid chain; its full sequence is MLPTFKRYMSSSAHQIPKHFKSLIYSTHEVEDCTKVLSVKNYTPKQDLSQSIVLKTLAFPINPSDINQLQGVYPSRPEKTYDYSTDEPAAIAGNEGVFEVVSLPSGSSKGDLKLGDRVIPLQANQGTWSNYRVFSSSSDLIKVNDLDLFSAATVSVNGCTGFQLVSDYIDWNSNGNEWIIQNAGTSSVSKIVTQVAKAKGIKTLSVIRDRDNFDEVAKVLEDKYGATKVISESQNNDKTFAKEVLSKILGENARVRLALNSVGGKSSASIARKLENNALMLTYGGMSKQPVTLPTSLHIFKGLTSKGYWVTEKNKKNPQSKIDTISDFIKMYNYGHIISPRDEIETLTWNTNTTTDEQLLELVKKGITGKGKKKMVVLEW.

The transit peptide at 1–9 directs the protein to the mitochondrion; that stretch reads MLPTFKRYM. Y73 acts as the Proton donor in catalysis. NADP(+) is bound by residues N157, 185 to 188, 208 to 210, 283 to 286, and 308 to 310; these read TSSV, RDR, YGGM, and YWV. S339 is modified (phosphoserine). K373 lines the NADP(+) pocket.

The protein belongs to the zinc-containing alcohol dehydrogenase family. Quinone oxidoreductase subfamily. As to quaternary structure, homodimer or in a complex with other proteins. Interacts with ARS1.

Its subcellular location is the mitochondrion matrix. The catalysed reaction is a 2,3-saturated acyl-[ACP] + NADP(+) = a (2E)-enoyl-[ACP] + NADPH + H(+). It carries out the reaction (2E,4E)-hexadienoyl-CoA + NADPH + H(+) = (4E)-hexenoyl-CoA + NADP(+). It catalyses the reaction (2E)-hexenoyl-CoA + NADPH + H(+) = hexanoyl-CoA + NADP(+). Catalyzes the NADPH-dependent reduction of trans-2-enoyl thioesters in mitochondrial fatty acid synthesis (fatty acid synthesis type II). Fatty acid chain elongation in mitochondria uses acyl carrier protein (ACP) as an acyl group carrier, but the enzyme accepts both ACP and CoA thioesters as substrates in vitro. Required for respiration and the maintenance of the mitochondrial compartment. This chain is Enoyl-[acyl-carrier-protein] reductase, mitochondrial (ETR1), found in Saccharomyces cerevisiae (strain ATCC 204508 / S288c) (Baker's yeast).